The chain runs to 341 residues: Ferrochelatase (341 aa).

Fe cation contacts are provided by H189 and E293.

Belongs to the ferrochelatase family.

The protein localises to the cytoplasm. It catalyses the reaction heme b + 2 H(+) = protoporphyrin IX + Fe(2+). It functions in the pathway porphyrin-containing compound metabolism; protoheme biosynthesis; protoheme from protoporphyrin-IX: step 1/1. Catalyzes the ferrous insertion into protoporphyrin IX. This chain is Ferrochelatase, found in Stutzerimonas stutzeri (strain A1501) (Pseudomonas stutzeri).